Here is a 439-residue protein sequence, read N- to C-terminus: Trigger factor (439 aa).

The PPIase FKBP-type domain maps to 163–248; it reads GDIAVIDFEG…LNQIKERVLP (86 aa).

Belongs to the FKBP-type PPIase family. Tig subfamily.

The protein resides in the cytoplasm. It carries out the reaction [protein]-peptidylproline (omega=180) = [protein]-peptidylproline (omega=0). Involved in protein export. Acts as a chaperone by maintaining the newly synthesized protein in an open conformation. Functions as a peptidyl-prolyl cis-trans isomerase. The sequence is that of Trigger factor from Syntrophotalea carbinolica (strain DSM 2380 / NBRC 103641 / GraBd1) (Pelobacter carbinolicus).